The following is a 312-amino-acid chain: MTIKRKKVSVIGAGFTGATTAFLLAQKELADVVLVDIPQLENPTKGKALDMLEASPVQGFDANIIGTSDYADTADSDVVVITAGIARKPGMSRDDLVATNSKIMKSITRDIAKHSPNAIILVLTNPVDAMTYSVFKEAGFPKERVIGQSGVLDTARFRTFISQELNLSVKDITGFVLGGHGDDMVPLVRYSYAGGIPLETLIPKERLEAIVERTRKGGGEIVGLLGNGSAYYAPAASLVEMTEAILKDQRRVLPAIAYLEGEYGYSDLYLGVPVILGGNGIEKIIELELLADEKEALDRSVESVRNVMKVLV.

Residues 12–17 and aspartate 36 contribute to the NAD(+) site; that span reads GAGFTG. Substrate-binding residues include arginine 87 and arginine 93. NAD(+) is bound by residues asparagine 100 and 123–125; that span reads LTN. Asparagine 125 serves as a coordination point for substrate. The residue at position 149 (serine 149) is a Phosphoserine. Residue arginine 156 participates in substrate binding. Residue histidine 180 is the Proton acceptor of the active site.

Belongs to the LDH/MDH superfamily. MDH type 3 family.

The catalysed reaction is (S)-malate + NAD(+) = oxaloacetate + NADH + H(+). In terms of biological role, catalyzes the reversible oxidation of malate to oxaloacetate. In Bacillus mycoides (strain KBAB4) (Bacillus weihenstephanensis), this protein is Malate dehydrogenase.